The chain runs to 342 residues: DNA-directed RNA polymerase subunit alpha (342 aa).

The alpha N-terminal domain (alpha-NTD) stretch occupies residues 1 to 239 (MTTFLAKNWS…DQLQVFINFQ (239 aa)). The interval 254–342 (INPVLLKKVY…SLAKKHEDQY (89 aa)) is alpha C-terminal domain (alpha-CTD).

Belongs to the RNA polymerase alpha chain family. Homodimer. The RNAP catalytic core consists of 2 alpha, 1 beta, 1 beta' and 1 omega subunit. When a sigma factor is associated with the core the holoenzyme is formed, which can initiate transcription.

The enzyme catalyses RNA(n) + a ribonucleoside 5'-triphosphate = RNA(n+1) + diphosphate. In terms of biological role, DNA-dependent RNA polymerase catalyzes the transcription of DNA into RNA using the four ribonucleoside triphosphates as substrates. This Orientia tsutsugamushi (strain Boryong) (Rickettsia tsutsugamushi) protein is DNA-directed RNA polymerase subunit alpha.